The chain runs to 293 residues: Actin-related protein 2/3 complex subunit 2 (293 aa).

Belongs to the ARPC2 family. As to quaternary structure, component of the Arp2/3 complex composed of arpB/Arp2, arpC/Arp3, arcA/p41-arc, arcB/p34-arc, arcC/p21-arc, arcD/p20-arc and arcE/p16-arc. Interacts with carmil (via the region between the LRR domain and COOH-terminal proline-rich domain); carmil is required for Arp2/3-dependent actin nucleation. Arp2/3 complex, MyoB, MyoC, and the alpha and beta subunits of capping protein all form a larger complex with carmil.

The protein resides in the cytoplasm. The protein localises to the cytoskeleton. It localises to the cell projection. Its subcellular location is the cytosol. It is found in the cell cortex. The protein resides in the pseudopodium. In terms of biological role, functions as a component of the Arp2/3 complex which is involved in regulation of actin polymerization and together with an activating nucleation-promoting factor (NPF) mediates the formation of branched actin networks. Seems to contact the pointed end of the daughter actin filament. The Arp2/3 complex is involved in organizing the actin system in cell motility and chemotaxis, in phagocytosis and macropinocytosis, at late steps of endosome processing, and in mitosis. In concert with a group of other proteins, the Arp2/3 complex plays a general role in the rapid activation and adaptation of the actin system to its multiple functions. The protein is Actin-related protein 2/3 complex subunit 2 (arcB) of Dictyostelium discoideum (Social amoeba).